Reading from the N-terminus, the 162-residue chain is MFRVGNGIDFHKLIHEPFRPLVLAGVEIKSEFAFLGHSDADVILHAVADAILGALSLGDIGVHFPDTDPQYKNMKSTRIIEKCLELVAEKKFKLINVDCTYVGDHPKISPIRAELNASLANITKLPLDCVSIKATTSEGMGALGRSEGVMVMATVLIESLKK.

A divalent metal cation-binding residues include aspartate 9 and histidine 11. 4-CDP-2-C-methyl-D-erythritol 2-phosphate is bound by residues 9–11 and 37–38; these read DFH and HS. Histidine 45 contacts a divalent metal cation. 4-CDP-2-C-methyl-D-erythritol 2-phosphate is bound by residues 59–61, 64–68, 135–138, and arginine 145; these read DIG, FPDTD, and TTSE.

It belongs to the IspF family. As to quaternary structure, homotrimer. It depends on a divalent metal cation as a cofactor.

The catalysed reaction is 4-CDP-2-C-methyl-D-erythritol 2-phosphate = 2-C-methyl-D-erythritol 2,4-cyclic diphosphate + CMP. Its pathway is isoprenoid biosynthesis; isopentenyl diphosphate biosynthesis via DXP pathway; isopentenyl diphosphate from 1-deoxy-D-xylulose 5-phosphate: step 4/6. Involved in the biosynthesis of isopentenyl diphosphate (IPP) and dimethylallyl diphosphate (DMAPP), two major building blocks of isoprenoid compounds. Catalyzes the conversion of 4-diphosphocytidyl-2-C-methyl-D-erythritol 2-phosphate (CDP-ME2P) to 2-C-methyl-D-erythritol 2,4-cyclodiphosphate (ME-CPP) with a corresponding release of cytidine 5-monophosphate (CMP). The chain is 2-C-methyl-D-erythritol 2,4-cyclodiphosphate synthase from Leptospira biflexa serovar Patoc (strain Patoc 1 / Ames).